The chain runs to 204 residues: Large ribosomal subunit protein uL13 (204 aa).

The protein belongs to the universal ribosomal protein uL13 family.

The sequence is that of Large ribosomal subunit protein uL13 (RpL13A) from Spodoptera frugiperda (Fall armyworm).